A 370-amino-acid polypeptide reads, in one-letter code: 4-hydroxy-3-methylbut-2-en-1-yl diphosphate synthase (flavodoxin) (370 aa).

Positions 270, 273, 305, and 312 each coordinate [4Fe-4S] cluster.

It belongs to the IspG family. [4Fe-4S] cluster serves as cofactor.

It catalyses the reaction (2E)-4-hydroxy-3-methylbut-2-enyl diphosphate + oxidized [flavodoxin] + H2O + 2 H(+) = 2-C-methyl-D-erythritol 2,4-cyclic diphosphate + reduced [flavodoxin]. It functions in the pathway isoprenoid biosynthesis; isopentenyl diphosphate biosynthesis via DXP pathway; isopentenyl diphosphate from 1-deoxy-D-xylulose 5-phosphate: step 5/6. Functionally, converts 2C-methyl-D-erythritol 2,4-cyclodiphosphate (ME-2,4cPP) into 1-hydroxy-2-methyl-2-(E)-butenyl 4-diphosphate. The polypeptide is 4-hydroxy-3-methylbut-2-en-1-yl diphosphate synthase (flavodoxin) (Marinomonas sp. (strain MWYL1)).